Here is an 82-residue protein sequence, read N- to C-terminus: Neuromacin (82 aa).

Residues 1–23 form the signal peptide; that stretch reads MALLNKLLCFALVFMIFGEFVTP. 4 cysteine pairs are disulfide-bonded: cysteine 25–cysteine 32, cysteine 47–cysteine 51, cysteine 61–cysteine 69, and cysteine 79–cysteine 81.

The protein belongs to the macin family.

It localises to the secreted. The sequence is that of Neuromacin from Hirudo medicinalis (Medicinal leech).